Consider the following 292-residue polypeptide: NAD kinase (292 aa).

The active-site Proton acceptor is the Asp73. Residues 73–74 (DG), 147–148 (NE), His158, Arg175, Asp177, 188–193 (TAYSLS), and Gln247 each bind NAD(+).

It belongs to the NAD kinase family. A divalent metal cation is required as a cofactor.

The protein resides in the cytoplasm. The catalysed reaction is NAD(+) + ATP = ADP + NADP(+) + H(+). Functionally, involved in the regulation of the intracellular balance of NAD and NADP, and is a key enzyme in the biosynthesis of NADP. Catalyzes specifically the phosphorylation on 2'-hydroxyl of the adenosine moiety of NAD to yield NADP. This Shigella boydii serotype 4 (strain Sb227) protein is NAD kinase.